The chain runs to 211 residues: Troponin I, cardiac muscle (211 aa).

Position 1 is an N-acetylalanine (alanine 1). A disordered region spans residues 1–43 (ADESRDAAGEARPAPAPVRRRSSANYRAYATEPHAKSKKKISA). Residue serine 4 is modified to Phosphoserine. Serine 22 carries the phosphoserine; by PHK, PKA and PKD/PRKD1 modification. Position 23 is a phosphoserine; by PKA and PKD/PRKD1 (serine 23). Tyrosine 26 carries the phosphotyrosine modification. Threonine 31 carries the post-translational modification Phosphothreonine; by STK4/MST1. The segment at 32-79 (EPHAKSKKKISASRKLQLKTLMLQIAKQELEREAEERRGEKGRALSTR) is involved in binding TNC. Serine 42 and serine 44 each carry phosphoserine; by PKC/PRKCE. Position 51 is a phosphothreonine; by STK4/MST1 (threonine 51). Serine 77 bears the Phosphoserine mark. Residue threonine 78 is modified to Phosphothreonine. Residues threonine 129 and threonine 143 each carry the phosphothreonine; by STK4/MST1 modification. Residues 129 to 150 (TQKIFDLRGKFKRPTLRLRVRI) are involved in binding TNC and actin. Serine 151 is subject to Phosphoserine; by PAK3. Phosphothreonine is present on threonine 182. Position 200 is a phosphoserine (serine 200).

It belongs to the troponin I family. In terms of assembly, interacts with TRIM63. Binds to actin and tropomyosin. Interacts with STK4/MST1. Post-translationally, phosphorylated at Ser-22 and Ser-23 by PRKD1; phosphorylation reduces myofilament calcium sensitivity. Phosphorylated preferentially at Thr-31. Phosphorylation by STK4/MST1 alters its binding affinity to TNNC1 (cardiac Tn-C) and TNNT2 (cardiac Tn-T). Phosphorylated at Ser-42 and Ser-44 by PRKCE; phosphorylation increases myocardium contractile dysfunction. Ser-22 is one of three sites in the region of residues 1-48 that are phosphorylated by phosphorylase kinase.

Functionally, troponin I is the inhibitory subunit of troponin, the thin filament regulatory complex which confers calcium-sensitivity to striated muscle actomyosin ATPase activity. In Oryctolagus cuniculus (Rabbit), this protein is Troponin I, cardiac muscle (TNNI3).